We begin with the raw amino-acid sequence, 143 residues long: Transcriptional regulator MraZ (143 aa).

2 consecutive SpoVT-AbrB domains span residues 5-47 (TYTP…PKEE) and 76-119 (ADEQ…DAQA).

It belongs to the MraZ family. As to quaternary structure, forms oligomers.

The protein localises to the cytoplasm. Its subcellular location is the nucleoid. The sequence is that of Transcriptional regulator MraZ from Corynebacterium glutamicum (strain R).